The following is a 397-amino-acid chain: Elongation factor Tu (397 aa).

The 197-residue stretch at 10–206 (KPHVNVGTIG…TMDTYFPQPE (197 aa)) folds into the tr-type G domain. The interval 19-26 (GHVDHGKT) is G1. A GTP-binding site is contributed by 19-26 (GHVDHGKT). T26 contributes to the Mg(2+) binding site. The interval 60–64 (GITIA) is G2. The interval 81–84 (DCPG) is G3. GTP is bound by residues 81-85 (DCPGH) and 136-139 (NKAD). The interval 136–139 (NKAD) is G4. Positions 174–176 (SAL) are G5.

The protein belongs to the TRAFAC class translation factor GTPase superfamily. Classic translation factor GTPase family. EF-Tu/EF-1A subfamily. As to quaternary structure, monomer.

It localises to the cytoplasm. The enzyme catalyses GTP + H2O = GDP + phosphate + H(+). In terms of biological role, GTP hydrolase that promotes the GTP-dependent binding of aminoacyl-tRNA to the A-site of ribosomes during protein biosynthesis. The protein is Elongation factor Tu of Coxiella burnetii (strain Dugway 5J108-111).